The following is a 926-amino-acid chain: Peripheral plasma membrane protein CASK (926 aa).

The 265-residue stretch at 12–276 (YELCEVIGKG…VYEALNHPWL (265 aa)) folds into the Protein kinase domain. ATP contacts are provided by residues 18–26 (IGKGPFSVV) and K41. Position 51 is a phosphoserine (S51). The active site involves D141. Residues S151 and S155 each carry the phosphoserine; by autocatalysis modification. At T182 the chain carries Phosphothreonine. 2 positions are modified to phosphoserine: K192 and S313. Residues 305 to 315 (KGAVLAAVSSH) form a calmodulin-binding region. L27 domains lie at 343-398 (AERA…SPQI) and 402-455 (PSDA…YSDE). The interval 482 to 909 (MENVTRVRLV…DETIRHLEEA (428 aa)) is required for interaction with NRXN1 (via C-terminal tail). Positions 489–564 (RLVQFQKNTD…MLREMRGSIT (76 aa)) constitute a PDZ domain. 2 positions are modified to phosphoserine: Y571 and S577. The disordered stretch occupies residues 574–610 (QSSSCERDSPSTSRQSPANGHSSTNNSVSDLPSTTQP). An SH3 domain is found at 612–682 (GRQIYVRAQF…PSPELQEWRV (71 aa)). One can recognise a Guanylate kinase-like domain in the interval 739–911 (RKTLVLLGAH…TIRHLEEAVE (173 aa)).

This sequence in the N-terminal section; belongs to the protein kinase superfamily. CAMK Ser/Thr protein kinase family. CaMK subfamily. Belongs to the MAGUK family. In terms of assembly, CASK and LIN7 form two mutually exclusive tripartite complexes with APBA1 or CASKIN1. Component of the brain-specific heterotrimeric complex (LIN-10-LIN-2-LIN-7 complex) composed of at least APBA1, CASK, and LIN7, which associates with the motor protein KIF17 to transport vesicles along microtubules. Forms a heterotrimeric complex with DLG1 and LIN7B via their L27 domains. Identified in a complex with ACTN4, IQGAP1, MAGI2, NPHS1, SPTAN1 and SPTBN1. Part of a complex containing CASK, TBR1 and TSPYL2. Interacts with WHRN. Interacts (via the PDZ, SH3 and guanylate kinase-like domains) with NRXN1 (via C-terminus). Interacts with CASKIN1, APBA1, LIN7(A/B/C) and L27 domain of DLG1 and isoform 2 of DLG4. Interacts with FCHSD2. Interacts with KIRREL3. Interacts with TBR1. Interacts with TSPYL2. Requires Unlike other protein kinases, does not require a divalent cation such as magnesium for catalytic activity. as cofactor. Ubiquitous. Expression is significantly greater in brain relative to kidney, lung, and liver and in fetal brain and kidney relative to lung and liver.

The protein resides in the nucleus. The protein localises to the cytoplasm. It is found in the cell membrane. The enzyme catalyses L-seryl-[protein] + ATP = O-phospho-L-seryl-[protein] + ADP + H(+). It catalyses the reaction L-threonyl-[protein] + ATP = O-phospho-L-threonyl-[protein] + ADP + H(+). With respect to regulation, differs from archetypal CaMK members in that the kinase domain exhibits a constitutively active conformation and the autoinhibitory region does not engage in direct contact with the ATP-binding cleft, although it still binds Ca(2+)/CAM. Multidomain scaffolding Mg(2+)-independent protein kinase that catalyzes the phosphotransfer from ATP to proteins such as NRXN1, and plays a role in synaptic transmembrane protein anchoring and ion channel trafficking. Contributes to neural development and regulation of gene expression via interaction with the transcription factor TBR1. Binds to cell-surface proteins, including amyloid precursor protein, neurexins and syndecans. May mediate a link between the extracellular matrix and the actin cytoskeleton via its interaction with syndecan and with the actin/spectrin-binding protein 4.1. Component of the LIN-10-LIN-2-LIN-7 complex, which associates with the motor protein KIF17 to transport vesicles containing N-methyl-D-aspartate (NMDA) receptor subunit NR2B along microtubules. This Homo sapiens (Human) protein is Peripheral plasma membrane protein CASK.